Consider the following 66-residue polypeptide: Beta-toxin Cb3 (66 aa).

Positions 1–66 (KEGYIVNYYD…VWPLPNKTCL (66 aa)) constitute an LCN-type CS-alpha/beta domain. 4 cysteine pairs are disulfide-bonded: C12-C65, C16-C41, C25-C46, and C29-C48.

The protein belongs to the long (4 C-C) scorpion toxin superfamily. Sodium channel inhibitor family. Beta subfamily. As to expression, expressed by the venom gland.

The protein resides in the secreted. In terms of biological role, beta toxins bind voltage-independently at site-4 of sodium channels (Nav) and reduces peak current and shifts the voltage of activation toward more negative potentials thereby affecting sodium channel activation and promoting spontaneous and repetitive firing. Has an inhibitory effect on voltage-gated sodium channels hNav1.1/SCN1A, hNav1.2/SCN2A, hNav1.4/SCN4A and hNav1.6/SCN8A. Reduces the peak current of hNav1.5/SCN5A but does not shift its voltage of activation. Also affects the inactivation processes of hNav1.1/SCN1A, hNav1.4/SCN4A, hNav1.5/SCN5A and hNav1.6/SCN8A. This toxin is active against mammals and lethal to mice. This Centruroides baergi (Scorpion) protein is Beta-toxin Cb3.